We begin with the raw amino-acid sequence, 162 residues long: MKTPLTEAISAADVRGSYLSNTEMQAVFGRFNRARAGLAAAQAFSNNGKKWAEAAANHVYQKFPYTTQMSGPQYASTPEGKSKCVRDIDHYLRTISYCCVVGGTGPLDEYVVSGLSELNSALGLSPSWYVAALEFVRDNHGLNGDVAGEANIYLNYAINALS.

(15Z)-phycoviolobilin is bound at residue Cys84.

Belongs to the phycobiliprotein family. As to quaternary structure, heterodimer of an alpha and a beta chain. In terms of processing, contains one covalently linked bilin chromophore.

The protein resides in the cellular thylakoid membrane. In terms of biological role, light-harvesting photosynthetic bile pigment-protein from the phycobiliprotein complex. This Nostoc sp. (strain PCC 7120 / SAG 25.82 / UTEX 2576) protein is Phycoerythrocyanin alpha chain (pecA).